A 271-amino-acid chain; its full sequence is Probable WRKY transcription factor 69 (271 aa).

Disordered stretches follow at residues 1–47 (MHRR…NVEK) and 130–166 (PSSS…TVTA). A compositionally biased stretch (acidic residues) spans 9–18 (ESDDEEDETY). A DNA-binding region (WRKY) is located at residues 64–130 (GEVYPPSDSW…YACDHNHPFP (67 aa)).

This sequence belongs to the WRKY group II-e family.

The protein localises to the nucleus. In terms of biological role, transcription factor. Interacts specifically with the W box (5'-(T)TGAC[CT]-3'), a frequently occurring elicitor-responsive cis-acting element. This Arabidopsis thaliana (Mouse-ear cress) protein is Probable WRKY transcription factor 69 (WRKY69).